Here is a 172-residue protein sequence, read N- to C-terminus: 3-hydroxydecanoyl-[acyl-carrier-protein] dehydratase (172 aa).

The active site involves His71.

The protein belongs to the thioester dehydratase family. FabA subfamily. In terms of assembly, homodimer.

The protein resides in the cytoplasm. It catalyses the reaction a (3R)-hydroxyacyl-[ACP] = a (2E)-enoyl-[ACP] + H2O. The enzyme catalyses (3R)-hydroxydecanoyl-[ACP] = (2E)-decenoyl-[ACP] + H2O. It carries out the reaction (2E)-decenoyl-[ACP] = (3Z)-decenoyl-[ACP]. The protein operates within lipid metabolism; fatty acid biosynthesis. Functionally, necessary for the introduction of cis unsaturation into fatty acids. Catalyzes the dehydration of (3R)-3-hydroxydecanoyl-ACP to E-(2)-decenoyl-ACP and then its isomerization to Z-(3)-decenoyl-ACP. Can catalyze the dehydratase reaction for beta-hydroxyacyl-ACPs with saturated chain lengths up to 16:0, being most active on intermediate chain length. In Maricaulis maris (strain MCS10) (Caulobacter maris), this protein is 3-hydroxydecanoyl-[acyl-carrier-protein] dehydratase.